Consider the following 227-residue polypeptide: Phosphoribosylformylglycinamidine synthase subunit PurQ (227 aa).

One can recognise a Glutamine amidotransferase type-1 domain in the interval 3–225 (FAVIVFPGSN…LRNWRESHVV (223 aa)). Catalysis depends on cysteine 86, which acts as the Nucleophile. Catalysis depends on residues histidine 194 and glutamate 196.

As to quaternary structure, part of the FGAM synthase complex composed of 1 PurL, 1 PurQ and 2 PurS subunits.

Its subcellular location is the cytoplasm. It carries out the reaction N(2)-formyl-N(1)-(5-phospho-beta-D-ribosyl)glycinamide + L-glutamine + ATP + H2O = 2-formamido-N(1)-(5-O-phospho-beta-D-ribosyl)acetamidine + L-glutamate + ADP + phosphate + H(+). The catalysed reaction is L-glutamine + H2O = L-glutamate + NH4(+). It participates in purine metabolism; IMP biosynthesis via de novo pathway; 5-amino-1-(5-phospho-D-ribosyl)imidazole from N(2)-formyl-N(1)-(5-phospho-D-ribosyl)glycinamide: step 1/2. Part of the phosphoribosylformylglycinamidine synthase complex involved in the purines biosynthetic pathway. Catalyzes the ATP-dependent conversion of formylglycinamide ribonucleotide (FGAR) and glutamine to yield formylglycinamidine ribonucleotide (FGAM) and glutamate. The FGAM synthase complex is composed of three subunits. PurQ produces an ammonia molecule by converting glutamine to glutamate. PurL transfers the ammonia molecule to FGAR to form FGAM in an ATP-dependent manner. PurS interacts with PurQ and PurL and is thought to assist in the transfer of the ammonia molecule from PurQ to PurL. The polypeptide is Phosphoribosylformylglycinamidine synthase subunit PurQ (Halalkalibacterium halodurans (strain ATCC BAA-125 / DSM 18197 / FERM 7344 / JCM 9153 / C-125) (Bacillus halodurans)).